A 206-amino-acid chain; its full sequence is MEEPPLREEEEEEEEDEAGPEGALGKSPLQLTAEDVYDISYVMGRELMALGSDPRVTQLQFKIVRVLEMLETLVNEGNLTVEELRMERDNLRKEVEGLRREGSAAGPEVNLGPDKMVVDLTDPNRPRFTLQELRDVLQERNKLKSQLLVVQEELQCYKSGLIPPREGPGGRREKEALFPRGSNANSNKEEKTIIRKLFSFRSGKQT.

The interval 1 to 29 (MEEPPLREEEEEEEEDEAGPEGALGKSPL) is disordered. The segment covering 8–19 (EEEEEEEEDEAG) has biased composition (acidic residues). The RH1 domain maps to 19 to 108 (GPEGALGKSP…RREGSAAGPE (90 aa)). The stretch at 67-159 (LEMLETLVNE…VQEELQCYKS (93 aa)) forms a coiled coil. The RH2 domain maps to 125–197 (RPRFTLQELR…KEEKTIIRKL (73 aa)). Residues 161–189 (LIPPREGPGGRREKEALFPRGSNANSNKE) form a disordered region. Residues 168-177 (PGGRREKEAL) show a composition bias toward basic and acidic residues.

Belongs to the RILPL family. Homodimer. Interacts with RAC1. Interacts (via N-terminus) with MYO5A, the interaction is required for its role in dendrite formation. Interacts with RAB8A; interaction is dependent on the phosphorylation of RAB8A on 'Thr-72'. Interacts with RAB10 and RAB12; interaction is dependent on the phosphorylation of 'Thr-73' on RAB10 and 'Ser-105' on RAB12.

The protein localises to the cytoplasm. The protein resides in the cytosol. Its subcellular location is the cytoskeleton. It is found in the microtubule organizing center. It localises to the centrosome. The protein localises to the cell projection. The protein resides in the cilium. Functionally, involved in cell shape and neuronal morphogenesis, positively regulating the establishment and maintenance of dendritic spines. Plays a role in cellular protein transport, including protein transport away from primary cilia. May function via activation of RAC1 and PAK1. The protein is RILP-like protein 2 (RILPL2) of Bos taurus (Bovine).